Reading from the N-terminus, the 234-residue chain is Proteasome subunit alpha type-6 (234 aa).

S14 is subject to Phosphoserine. K191 participates in a covalent cross-link: Glycyl lysine isopeptide (Lys-Gly) (interchain with G-Cter in ubiquitin).

This sequence belongs to the peptidase T1A family. As to quaternary structure, the 26S proteasome consists of a 20S proteasome core and two 19S regulatory subunits. The 20S proteasome core is composed of 28 subunits that are arranged in four stacked rings, resulting in a barrel-shaped structure. The two end rings are each formed by seven alpha subunits, and the two central rings are each formed by seven beta subunits. The catalytic chamber with the active sites is on the inside of the barrel.

It localises to the cytoplasm. The protein localises to the nucleus. The proteasome degrades poly-ubiquitinated proteins in the cytoplasm and in the nucleus. It is essential for the regulated turnover of proteins and for the removal of misfolded proteins. The proteasome is a multicatalytic proteinase complex that is characterized by its ability to cleave peptides with Arg, Phe, Tyr, Leu, and Glu adjacent to the leaving group at neutral or slightly basic pH. It has an ATP-dependent proteolytic activity. The chain is Proteasome subunit alpha type-6 (PRE5) from Saccharomyces cerevisiae (strain ATCC 204508 / S288c) (Baker's yeast).